Here is a 404-residue protein sequence, read N- to C-terminus: Glucosyl-3-phosphoglycerate synthase (404 aa).

Residue aspartate 146 participates in a divalent metal cation binding. 188–190 (GRV) contributes to the (2R)-3-phosphoglycerate binding site. Residue histidine 270 coordinates a divalent metal cation.

The protein belongs to the glycosyltransferase 2 family. It depends on Mn(2+) as a cofactor. The cofactor is Co(2+). Requires Mg(2+) as cofactor.

The catalysed reaction is an NDP-alpha-D-glucose + (2R)-3-phosphoglycerate = (2R)-2-O-(alpha-D-glucopyranosyl)-3-phospho-glycerate + a ribonucleoside 5'-diphosphate + H(+). Involved in the biosynthesis of 6-O-methylglucose lipopolysaccarides (MGLPs). Catalyzes the transfer of a glucose (Glc) moiety from uridine diphosphate (UDP-Glc) to the position 2 of 3-phospho-D-glycerate (3-PGA) to form glucosyl-3-phosphoglycerate (GPG). The sequence is that of Glucosyl-3-phosphoglycerate synthase from Methanococcoides burtonii (strain DSM 6242 / NBRC 107633 / OCM 468 / ACE-M).